A 408-amino-acid chain; its full sequence is Aminoacylase-1 (408 aa).

Zn(2+) is bound at residue histidine 76. The active site involves aspartate 78. Zn(2+) is bound at residue aspartate 109. Glutamate 143 (proton acceptor) is an active-site residue. Zn(2+) is bound by residues glutamate 144, glutamate 172, and histidine 379.

This sequence belongs to the peptidase M20A family. Homodimer. Zn(2+) is required as a cofactor.

Its subcellular location is the cytoplasm. It catalyses the reaction an N-acyl-L-amino acid + H2O = an L-alpha-amino acid + a carboxylate. The catalysed reaction is an N-acetyl-L-cysteine-S-conjugate + H2O = an S-substituted L-cysteine + acetate. Involved in the hydrolysis of N-acylated or N-acetylated amino acids (except L-aspartate). This is Aminoacylase-1 (acy1) from Dictyostelium discoideum (Social amoeba).